Reading from the N-terminus, the 190-residue chain is Elongation factor P-like protein (190 aa).

Belongs to the elongation factor P family.

This is Elongation factor P-like protein from Psychromonas ingrahamii (strain DSM 17664 / CCUG 51855 / 37).